The chain runs to 365 residues: MFEINPVNNRIQDLTERSDVLRGYLDYDAKKERLEEVNAELEQPDVWNEPERAQALGKERSSLEAVVDTLDQMKQGLEDVSGLLELAVEADDEETFNEAVAELDALEEKLAQLEFRRMFSGEYDSADCYLDIQAGSGGTEAQDWASMLERMYLRWAESRGFKTEIIEESEGEVAGIKSVTIKISGDYAYGWLRTETGVHRLVRKSPFDSGGRRHTSFSSAFVYPEVDDDIDIEINPADLRIDVYRASGAGGQHVNRTESAVRITHIPTGIVTQCQNDRSQHKNKDQAMKQMKAKLYELEMQKKNAEKQAMEDNKSDIGWGSQIRSYVLDDSRIKDLRTGVETRNTQAVLDGSLDQFIEASLKAGL.

Q252 is subject to N5-methylglutamine.

The protein belongs to the prokaryotic/mitochondrial release factor family. Post-translationally, methylated by PrmC. Methylation increases the termination efficiency of RF2.

The protein resides in the cytoplasm. In terms of biological role, peptide chain release factor 2 directs the termination of translation in response to the peptide chain termination codons UGA and UAA. The polypeptide is Peptide chain release factor 2 (Shigella flexneri).